We begin with the raw amino-acid sequence, 206 residues long: Transmembrane emp24 domain-containing protein bai (206 aa).

An N-terminal signal peptide occupies residues 1–20 (MLKVLYVIFTIFGYIWPIYS). Residues 21-172 (VMFHLTPNTQ…RDTNEKTNSR (152 aa)) are Lumenal-facing. A GOLD domain is found at 30 to 140 (QKCLKEDIQA…LKPLEVDLKR (111 aa)). Residues 173–193 (VLFFSIFSMCCLLGLATWQVL) traverse the membrane as a helical segment. Over 194–206 (YLRRYFKAKKLIE) the chain is Cytoplasmic.

The protein belongs to the EMP24/GP25L family.

It localises to the membrane. Eca and bai are essential, though not redundant, for dorsoventral patterning of the embryo. Specifically required during early embryogenesis for the activity of maternal tkv, while the zygotic tkv is not affected. The protein is Transmembrane emp24 domain-containing protein bai of Drosophila virilis (Fruit fly).